The sequence spans 193 residues: CDP-diacylglycerol--glycerol-3-phosphate 3-phosphatidyltransferase (193 aa).

4 helical membrane-spanning segments follow: residues 8-28, 39-59, 88-108, and 157-177; these read ITLA…APFD, IPVA…TDWV, AALI…IVII, and LVSF…TVVS.

This sequence belongs to the CDP-alcohol phosphatidyltransferase class-I family.

The protein localises to the cell membrane. It catalyses the reaction a CDP-1,2-diacyl-sn-glycerol + sn-glycerol 3-phosphate = a 1,2-diacyl-sn-glycero-3-phospho-(1'-sn-glycero-3'-phosphate) + CMP + H(+). It participates in phospholipid metabolism; phosphatidylglycerol biosynthesis; phosphatidylglycerol from CDP-diacylglycerol: step 1/2. Functionally, this protein catalyzes the committed step to the synthesis of the acidic phospholipids. The chain is CDP-diacylglycerol--glycerol-3-phosphate 3-phosphatidyltransferase (pgsA) from Bacillus subtilis (strain 168).